The sequence spans 208 residues: EF-hand protein 5 variant 2 (208 aa).

The tract at residues Met1–Ala35 is disordered. EF-hand domains lie at Met64–Glu98, Glu99–Asp134, Thr135–Arg170, and Ser171–Asn206. The Ca(2+) site is built by Glu118, Asp123, Asp148, Thr152, and Tyr154.

This chain is EF-hand protein 5 variant 2, found in Trypanosoma cruzi.